Consider the following 557-residue polypeptide: Myo-inositol transporter 2 (557 aa).

The Cytoplasmic portion of the chain corresponds to 1–76 (MDFNNIPLAT…ENGEGFEAEK (76 aa)). The disordered stretch occupies residues 24–69 (EMTTRPSETKKKVPFSEDMREIPSLPNEEEANATDPQANEVADENG). Positions 30–44 (SETKKKVPFSEDMRE) are enriched in basic and acidic residues. A helical membrane pass occupies residues 77–97 (ISSWIWVLSAVAGISGLLFGY). The Extracellular segment spans residues 98-99 (DT). Residues 100–120 (GVISGALAVLGSDLGHVLSSG) traverse the membrane as a helical segment. The Cytoplasmic segment spans residues 121-123 (QKE). A helical transmembrane segment spans residues 124 to 144 (LITSATSFAALISATTSGWLA). Topologically, residues 145-157 (DWVGRKRLLLCAD) are extracellular. Residues 158 to 178 (AIFVIGSVIMAASRNVAMMVV) traverse the membrane as a helical segment. Residues 179 to 180 (GR) are Cytoplasmic-facing. Residues 181-201 (FIVGYGIGLTSLIVPMYITEL) traverse the membrane as a helical segment. The Extracellular segment spans residues 202-209 (APARLRGR). The chain crosses the membrane as a helical span at residues 210 to 230 (LVIIYVVFITGGQLIAYSLNA). The Cytoplasmic portion of the chain corresponds to 231–240 (AFEHVHQGWR). A helical membrane pass occupies residues 241-261 (IMFGIGAAPALGQLISLFWTP). Over 262 to 367 (ESPRYLLRHN…IFQSVGFKNS (106 aa)) the chain is Extracellular. The chain crosses the membrane as a helical span at residues 368–388 (ISVSIVVGATNFVFTIVAFMF). The Cytoplasmic portion of the chain corresponds to 389 to 396 (IDRIGRRR). A helical membrane pass occupies residues 397 to 417 (ILLCTSAVMIAGLALCAIAYH). The Extracellular portion of the chain corresponds to 418-432 (FLPADTTQNTNSGWQ). Residues 433-453 (YVVLASIIIFLASYASGIGNI) traverse the membrane as a helical segment. Residues 454 to 468 (PWQQAELFPMEVRAL) are Cytoplasmic-facing. A helical transmembrane segment spans residues 469–489 (GAGFSTAINWVGNLIISASFL). Residues 490–498 (TMMESITPT) lie on the Extracellular side of the membrane. The chain crosses the membrane as a helical span at residues 499 to 519 (GTFALFAGFCFVGLVTSYFTY). Residues 520–557 (PELAGMSIENIHKLLEKGFWQAVKESTKRVRKGRIDEA) lie on the Cytoplasmic side of the membrane.

The protein belongs to the major facilitator superfamily. Sugar transporter (TC 2.A.1.1) family.

It is found in the membrane. It carries out the reaction myo-inositol(out) + H(+)(out) = myo-inositol(in) + H(+)(in). Its function is as follows. Transporter for myo-inositol. The polypeptide is Myo-inositol transporter 2 (itr2) (Schizosaccharomyces pombe (strain 972 / ATCC 24843) (Fission yeast)).